The chain runs to 259 residues: UPF0246 protein RD1_0358 (259 aa).

This sequence belongs to the UPF0246 family.

The polypeptide is UPF0246 protein RD1_0358 (Roseobacter denitrificans (strain ATCC 33942 / OCh 114) (Erythrobacter sp. (strain OCh 114))).